The chain runs to 83 residues: Exodeoxyribonuclease 7 small subunit (83 aa).

The protein belongs to the XseB family. In terms of assembly, heterooligomer composed of large and small subunits.

The protein resides in the cytoplasm. The enzyme catalyses Exonucleolytic cleavage in either 5'- to 3'- or 3'- to 5'-direction to yield nucleoside 5'-phosphates.. Bidirectionally degrades single-stranded DNA into large acid-insoluble oligonucleotides, which are then degraded further into small acid-soluble oligonucleotides. In Heliobacterium modesticaldum (strain ATCC 51547 / Ice1), this protein is Exodeoxyribonuclease 7 small subunit.